The chain runs to 502 residues: ATP synthase subunit alpha (502 aa).

169–176 (GDRQTGKT) contributes to the ATP binding site.

The protein belongs to the ATPase alpha/beta chains family. In terms of assembly, F-type ATPases have 2 components, CF(1) - the catalytic core - and CF(0) - the membrane proton channel. CF(1) has five subunits: alpha(3), beta(3), gamma(1), delta(1), epsilon(1). CF(0) has three main subunits: a(1), b(2) and c(9-12). The alpha and beta chains form an alternating ring which encloses part of the gamma chain. CF(1) is attached to CF(0) by a central stalk formed by the gamma and epsilon chains, while a peripheral stalk is formed by the delta and b chains.

The protein localises to the cell membrane. The enzyme catalyses ATP + H2O + 4 H(+)(in) = ADP + phosphate + 5 H(+)(out). Produces ATP from ADP in the presence of a proton gradient across the membrane. The alpha chain is a regulatory subunit. In Bacillus velezensis (strain DSM 23117 / BGSC 10A6 / LMG 26770 / FZB42) (Bacillus amyloliquefaciens subsp. plantarum), this protein is ATP synthase subunit alpha.